The chain runs to 112 residues: Ciliary microtubule inner protein 3 (112 aa).

The interval 1–34 (MCKDSQKPSVPSHGPKTPSCKGVKAPHSSRPRAW) is disordered.

The protein belongs to the CIMIP3-like family.

The protein resides in the cytoplasm. It is found in the cytoskeleton. It localises to the flagellum axoneme. The sequence is that of Ciliary microtubule inner protein 3 from Homo sapiens (Human).